The sequence spans 299 residues: N-acetylmuramic acid 6-phosphate etherase (299 aa).

The SIS domain occupies 54-217 (TIAQYKKGGR…STITMVGVGK (164 aa)). Glutamate 82 functions as the Proton donor in the catalytic mechanism. Glutamate 113 is a catalytic residue.

This sequence belongs to the GCKR-like family. MurNAc-6-P etherase subfamily. In terms of assembly, homodimer.

The enzyme catalyses N-acetyl-D-muramate 6-phosphate + H2O = N-acetyl-D-glucosamine 6-phosphate + (R)-lactate. The protein operates within amino-sugar metabolism; N-acetylmuramate degradation. Specifically catalyzes the cleavage of the D-lactyl ether substituent of MurNAc 6-phosphate, producing GlcNAc 6-phosphate and D-lactate. The sequence is that of N-acetylmuramic acid 6-phosphate etherase from Staphylococcus aureus (strain bovine RF122 / ET3-1).